A 550-amino-acid chain; its full sequence is MDDLFPLIFPSEPAQASGPYVEIIEQPKQRGMRFRYKCEGRSAGSIPGERSTDTTKTHPTIKINGYTGPGTVRISLVTKDPPHRPHPHELVGKDCRDGFYEAELCPDRCIHSFQNLGIQCVKKRDLEQAISQRIQTNNNPFQVPIEEQRGDYDLNAVRLCFQVTVRDPSGRPLRLTPVLSHPIFDNRAPNTAELKICRVNRNSGSCLGGDEIFLLCDKVQKEDIEVYFTGPGWEARGSFSQADVHRQVAIVFRTPPYADPSLQAPVRVSMQLRRPSDRELSEPMEFQYLPDTDDRHRIEEKRKRTYETFKSIMKKSPFNGPTEPRPPPRRIAVPSRGPTSVPKPAPQPYAFSTSLSTINFDEFSPMVLPPGQISNQALALAPSSAPVLAQTMVPSSAMVPSLAQPPAPVPVLAPGPPQSLSAPVPKSTQAGEGTLSEALLHLQFDADEDLGALLGNNTDPGVFTDLASVDNSEFQQLLNQGVAMSHSTAEPMLMEYPEAITRLVTGSQRPPDPAPATLGTSGLPNGLSGDEDFSSIADMDFSALLSQISS.

At Met-1 the chain carries N-acetylmethionine. The 175-residue stretch at 16–190 folds into the RHD domain; sequence ASGPYVEIIE…HPIFDNRAPN (175 aa). Lys-37 is covalently cross-linked (Glycyl lysine isopeptide (Lys-Gly) (interchain with G-Cter in SUMO3)). The residue at position 38 (Cys-38) is a Cysteine persulfide; alternate. The residue at position 38 (Cys-38) is an S-nitrosocysteine; alternate. 4 positions are modified to N6-acetyllysine: Lys-122, Lys-123, Lys-218, and Lys-221. Glycyl lysine isopeptide (Lys-Gly) (interchain with G-Cter in SUMO3); alternate cross-links involve residues Lys-122 and Lys-123. At Thr-254 the chain carries Phosphothreonine. Ser-276 and Ser-281 each carry phosphoserine. Positions 301 to 304 match the Nuclear localization signal motif; sequence KRKR. At Lys-310 the chain carries N6-acetyllysine; alternate. The residue at position 310 (Lys-310) is an N6-methyllysine. At Ser-311 the chain carries Phosphoserine. 2 transcriptional activation domain regions span residues 342–388 and 414–476; these read PKPA…APVL and PGPP…EFQQ. Thr-434 is subject to Phosphothreonine. Ser-468 is subject to Phosphoserine. A Phosphothreonine modification is found at Thr-505. Residues 520 to 550 are transcriptional activation domain 2; the sequence is TSGLPNGLSGDEDFSSIADMDFSALLSQISS. Ser-535 is modified (phosphoserine). Positions 535–543 match the 9aaTAD motif; the sequence is SIADMDFSA.

Component of the NF-kappa-B p65-p50 complex. Component of the NF-kappa-B p65-c-Rel complex. Homodimer; component of the NF-kappa-B p65-p65 complex. Component of the NF-kappa-B p65-p52 complex. May interact with ETHE1. Binds TLE5 and TLE1. Interacts with TP53BP2. Binds to and is phosphorylated by the activated form of either RPS6KA4 or RPS6KA5. Interacts with ING4 and this interaction may be indirect. Interacts with CARM1, USP48 and UNC5CL. Interacts with IRAK1BP1. Interacts with NFKBID. Interacts with NFKBIA. Interacts with GSK3B. Interacts with NFKBIB. Interacts with NFKBIE. Interacts with NFKBIZ. Interacts with EHMT1 (via ANK repeats). Part of a 70-90 kDa complex at least consisting of CHUK, IKBKB, NFKBIA, RELA, ELP1 and MAP3K14. Interacts with HDAC3; HDAC3 mediates the deacetylation of RELA. Interacts with HDAC1; the interaction requires non-phosphorylated RELA. Interacts with CBP; the interaction requires phosphorylated RELA. Interacts (phosphorylated at 'Thr-254') with PIN1; the interaction inhibits p65 binding to NFKBIA. Interacts with SOCS1. Interacts with UXT. Interacts with MTDH and PHF11. Interacts with ARRB2. Interacts with NFKBIA (when phosphorylated), the interaction is direct; phosphorylated NFKBIA is part of a SCF(BTRC)-like complex lacking CUL1. Interacts with RNF25. Interacts (via C-terminus) with DDX1. Interacts with UFL1 and COMMD1. Interacts with BRMS1; this promotes deacetylation of 'Lys-310'. Interacts with NOTCH2. Directly interacts with MEN1; this interaction represses NFKB-mediated transactivation. Interacts with AKIP1, which promotes the phosphorylation and nuclear retention of RELA. Interacts (via the RHD) with GFI1; the interaction, after bacterial lipopolysaccharide (LPS) stimulation, inhibits the transcriptional activity by interfering with the DNA-binding activity to target gene promoter DNA. Interacts (when acetylated at Lys-310) with BRD4; leading to activation of the NF-kappa-B pathway. Interacts with MEFV. Interacts with CLOCK. Interacts (via N-terminus) with CPEN1; this interaction induces proteolytic cleavage of p65/RELA subunit and inhibition of NF-kappa-B transcriptional activity. Interacts with FOXP3. Interacts with CDK5RAP3; stimulates the interaction of RELA with HDAC1, HDAC2 and HDAC3 thereby inhibiting NF-kappa-B transcriptional activity. Interacts with DHX9; this interaction is direct and activates NF-kappa-B-mediated transcription. Interacts with LRRC25. Interacts with TBX21. Interacts with KAT2A. Interacts with ZBTB7A; involved in the control by RELA of the accessibility of target gene promoters. Directly interacts with DDX3X; this interaction may trap RELA in the cytoplasm, impairing nuclear relocalization upon TNF activating signals. Interacts with PHF2. Interacts with MKRN2; the interaction leads to its polyubiquitination and proteasome-dependent degradation. Interacts with ECSIT. Interacts with RAB28; the interaction contributes to RELA transport from cytoplasm to nucleus. In terms of processing, ubiquitinated by RNF182, leading to its proteasomal degradation. Degradation is required for termination of NF-kappa-B response. Polyubiquitinated via 'Lys-29'-linked ubiquitin; leading to lysosomal degradation. Post-translationally, monomethylated at Lys-310 by SETD6. Monomethylation at Lys-310 is recognized by the ANK repeats of EHMT1 and promotes the formation of repressed chromatin at target genes, leading to down-regulation of NF-kappa-B transcription factor activity. Phosphorylation at Ser-311 disrupts the interaction with EHMT1 without preventing monomethylation at Lys-310 and relieves the repression of target genes. Phosphorylation at Ser-311 disrupts the interaction with EHMT1 and promotes transcription factor activity. Phosphorylation on Ser-535 stimulates acetylation on Lys-310 and interaction with CBP; the phosphorylated and acetylated forms show enhanced transcriptional activity. Phosphorylation at Ser-276 by RPS6KA4 and RPS6KA5 promotes its transactivation and transcriptional activities. In terms of processing, phosphorylation at Ser-75 by herpes simplex virus 1/HHV-1 inhibits NF-kappa-B activation. Post-translationally, reversibly acetylated; the acetylation seems to be mediated by CBP, the deacetylation by HDAC3 and SIRT2. Acetylation at Lys-122 enhances DNA binding and impairs association with NFKBIA. Acetylation at Lys-310 is required for full transcriptional activity in the absence of effects on DNA binding and NFKBIA association. Acetylation at Lys-310 promotes interaction with BRD4. Acetylation can also lower DNA-binding and results in nuclear export. Interaction with BRMS1 promotes deacetylation of Lys-310. Lys-310 is deacetylated by SIRT2. S-nitrosylation of Cys-38 inactivates the enzyme activity. In terms of processing, sulfhydration at Cys-38 mediates the anti-apoptotic activity by promoting the interaction with RPS3 and activating the transcription factor activity. Post-translationally, sumoylation by PIAS3 negatively regulates DNA-bound activated NF-kappa-B. Proteolytically cleaved within a conserved N-terminus region required for base-specific contact with DNA in a CPEN1-mediated manner, and hence inhibits NF-kappa-B transcriptional activity.

It is found in the nucleus. Its subcellular location is the cytoplasm. Functionally, NF-kappa-B is a pleiotropic transcription factor present in almost all cell types and is the endpoint of a series of signal transduction events that are initiated by a vast array of stimuli related to many biological processes such as inflammation, immunity, differentiation, cell growth, tumorigenesis and apoptosis. NF-kappa-B is a homo- or heterodimeric complex formed by the Rel-like domain-containing proteins RELA/p65, RELB, NFKB1/p105, NFKB1/p50, REL and NFKB2/p52. The heterodimeric RELA-NFKB1 complex appears to be most abundant one. The dimers bind at kappa-B sites in the DNA of their target genes and the individual dimers have distinct preferences for different kappa-B sites that they can bind with distinguishable affinity and specificity. Different dimer combinations act as transcriptional activators or repressors, respectively. The NF-kappa-B heterodimeric RELA-NFKB1 and RELA-REL complexes, for instance, function as transcriptional activators. NF-kappa-B is controlled by various mechanisms of post-translational modification and subcellular compartmentalization as well as by interactions with other cofactors or corepressors. NF-kappa-B complexes are held in the cytoplasm in an inactive state complexed with members of the NF-kappa-B inhibitor (I-kappa-B) family. In a conventional activation pathway, I-kappa-B is phosphorylated by I-kappa-B kinases (IKKs) in response to different activators, subsequently degraded thus liberating the active NF-kappa-B complex which translocates to the nucleus. The inhibitory effect of I-kappa-B on NF-kappa-B through retention in the cytoplasm is exerted primarily through the interaction with RELA. RELA shows a weak DNA-binding site which could contribute directly to DNA binding in the NF-kappa-B complex. Besides its activity as a direct transcriptional activator, it is also able to modulate promoters accessibility to transcription factors and thereby indirectly regulate gene expression. Associates with chromatin at the NF-kappa-B promoter region via association with DDX1. Essential for cytokine gene expression in T-cells. The NF-kappa-B homodimeric RELA-RELA complex appears to be involved in invasin-mediated activation of IL-8 expression. Key transcription factor regulating the IFN response during SARS-CoV-2 infection. This chain is Transcription factor p65, found in Rattus norvegicus (Rat).